A 424-amino-acid chain; its full sequence is Serine hydroxymethyltransferase 2 (424 aa).

(6S)-5,6,7,8-tetrahydrofolate-binding positions include Leu-125 and 129 to 131; that span reads GHL. The residue at position 234 (Lys-234) is an N6-(pyridoxal phosphate)lysine. Glu-250 contacts (6S)-5,6,7,8-tetrahydrofolate.

It belongs to the SHMT family. Homodimer. The cofactor is pyridoxal 5'-phosphate.

It localises to the cytoplasm. The enzyme catalyses (6R)-5,10-methylene-5,6,7,8-tetrahydrofolate + glycine + H2O = (6S)-5,6,7,8-tetrahydrofolate + L-serine. Its pathway is one-carbon metabolism; tetrahydrofolate interconversion. It functions in the pathway amino-acid biosynthesis; glycine biosynthesis; glycine from L-serine: step 1/1. In terms of biological role, catalyzes the reversible interconversion of serine and glycine with tetrahydrofolate (THF) serving as the one-carbon carrier. This reaction serves as the major source of one-carbon groups required for the biosynthesis of purines, thymidylate, methionine, and other important biomolecules. Also exhibits THF-independent aldolase activity toward beta-hydroxyamino acids, producing glycine and aldehydes, via a retro-aldol mechanism. This Ralstonia nicotianae (strain ATCC BAA-1114 / GMI1000) (Ralstonia solanacearum) protein is Serine hydroxymethyltransferase 2.